Consider the following 150-residue polypeptide: Cytochrome b5 type B (150 aa).

Residues 1-15 (MSGSMATAEASGSDG) constitute a propeptide that is removed on maturation. The interval 1-21 (MSGSMATAEASGSDGKGQEVE) is disordered. Residue S23 is modified to Phosphoserine. The Cytochrome b5 heme-binding domain occupies 24–100 (VTYYRMEEVA…LKQYYIGDIH (77 aa)). Position 34 is an N6-acetyllysine (K34). Position 37 is a phosphoserine (S37). Position 39 is an N6-methyllysine (K39). Positions 59 and 83 each coordinate heme. S84 is modified (phosphoserine). The chain crosses the membrane as a helical span at residues 122–144 (CWAYWILPIIGAVLLGFLYRYYT).

Belongs to the cytochrome b5 family. As to quaternary structure, component of a complex composed of cytochrome b5, NADH-cytochrome b5 reductase (CYB5R3) and MTARC2.

The protein localises to the mitochondrion outer membrane. In terms of biological role, cytochrome b5 is a membrane-bound hemoprotein functioning as an electron carrier for several membrane-bound oxygenases. This Pongo abelii (Sumatran orangutan) protein is Cytochrome b5 type B (CYB5B).